The chain runs to 171 residues: Shikimate kinase (171 aa).

14–19 provides a ligand contact to ATP; the sequence is GAGKST. Position 18 (S18) interacts with Mg(2+). D36, R60, and G82 together coordinate substrate. Residue R120 participates in ATP binding. Position 139 (R139) interacts with substrate. Residue Q156 participates in ATP binding.

It belongs to the shikimate kinase family. Monomer. Mg(2+) is required as a cofactor.

It localises to the cytoplasm. It carries out the reaction shikimate + ATP = 3-phosphoshikimate + ADP + H(+). It participates in metabolic intermediate biosynthesis; chorismate biosynthesis; chorismate from D-erythrose 4-phosphate and phosphoenolpyruvate: step 5/7. In terms of biological role, catalyzes the specific phosphorylation of the 3-hydroxyl group of shikimic acid using ATP as a cosubstrate. This chain is Shikimate kinase, found in Shewanella pealeana (strain ATCC 700345 / ANG-SQ1).